A 194-amino-acid chain; its full sequence is SAYSvFN domain-containing protein 1 (194 aa).

Residues 1–10 (MEQRLAEFRA) are compositionally biased toward basic and acidic residues. Disordered stretches follow at residues 1-43 (MEQR…TPKA) and 58-104 (PPSA…LTPR). The Cytoplasmic portion of the chain corresponds to 1–116 (MEQRLAEFRA…SLLTSVTLLK (116 aa)). The span at 22–32 (SASSQSTQTSG) shows a compositional bias: polar residues. Residues 82 to 101 (PWSPAEEAPPPPQPPPPQPL) are compositionally biased toward pro residues. Residues 102–116 (TPRDRSLLTSVTLLK) are middle helical (MH). An intramembrane region (helical) is located at residues 117–137 (VLLWLVLLGLFVELEFGLAYF). Residues 138-194 (VLSLFYWMYVGMRGPEEKMQGEKSAYSVFNPGCEAIQGSLTAEQLERELHLRPLPRR) are Cytoplasmic-facing.

It belongs to the SAYSD1 family. In terms of assembly, associates (via N-terminus) with ribosomes.

It is found in the endoplasmic reticulum membrane. It localises to the cytoplasmic vesicle membrane. In terms of biological role, ufmylation 'reader' component of a translocation-associated quality control pathway, a mechanism that takes place when a ribosome has stalled during translation, and which is required to degrade clogged substrates. Specifically recognizes and binds ufmylated ribosomes when a ribosome has stalled, promoting the transport of stalled nascent chain via the TRAPP complex to lysosomes for degradation. This chain is SAYSvFN domain-containing protein 1 (SAYSD1), found in Bos taurus (Bovine).